The following is a 745-amino-acid chain: Translation initiation factor IF-2 (745 aa).

The disordered stretch occupies residues 1 to 154 (MSDKPRRDTG…PAARPVVRPR (154 aa)). Over residues 36–56 (TGRSPNASTGGNRSAGNQAGN) the composition is skewed to polar residues. Positions 68–98 (ATTPAPNRNTPPAGARQGGAANARTGTPPVA) are enriched in low complexity. Over residues 99 to 113 (RGGGGGVTPPTGRGG) the composition is skewed to gly residues. The span at 114–126 (NNPRAARNQPRSR) shows a compositional bias: low complexity. Positions 127–138 (QQPEEREREHVL) are enriched in basic and acidic residues. Residues 241 to 410 (PRPPVVTIMG…LLVADLEDLR (170 aa)) enclose the tr-type G domain. Residues 250–257 (GHVDHGKT) form a G1 region. 250–257 (GHVDHGKT) contributes to the GTP binding site. The tract at residues 275–279 (GITQH) is G2. Positions 296–299 (DTPG) are G3. GTP-binding positions include 296–300 (DTPGH) and 350–353 (NKID). The G4 stretch occupies residues 350–353 (NKID). The G5 stretch occupies residues 386 to 388 (SAR).

The protein belongs to the TRAFAC class translation factor GTPase superfamily. Classic translation factor GTPase family. IF-2 subfamily.

It is found in the cytoplasm. Functionally, one of the essential components for the initiation of protein synthesis. Protects formylmethionyl-tRNA from spontaneous hydrolysis and promotes its binding to the 30S ribosomal subunits. Also involved in the hydrolysis of GTP during the formation of the 70S ribosomal complex. This Chloroflexus aurantiacus (strain ATCC 29366 / DSM 635 / J-10-fl) protein is Translation initiation factor IF-2.